The primary structure comprises 332 residues: Pyrroline-5-carboxylate reductase (332 aa).

It belongs to the pyrroline-5-carboxylate reductase family.

The catalysed reaction is L-proline + NADP(+) = (S)-1-pyrroline-5-carboxylate + NADPH + 2 H(+). The enzyme catalyses L-proline + NAD(+) = (S)-1-pyrroline-5-carboxylate + NADH + 2 H(+). It participates in amino-acid biosynthesis; L-proline biosynthesis; L-proline from L-glutamate 5-semialdehyde: step 1/1. The polypeptide is Pyrroline-5-carboxylate reductase (pro-1) (Neurospora crassa (strain ATCC 24698 / 74-OR23-1A / CBS 708.71 / DSM 1257 / FGSC 987)).